The primary structure comprises 290 residues: Shikimate dehydrogenase (NADP(+)) (290 aa).

Residues 22–24 and T68 each bind shikimate; that span reads SLS. K72 (proton acceptor) is an active-site residue. D84 lines the NADP(+) pocket. Positions 93 and 108 each coordinate shikimate. Residues 133–137 and I228 contribute to the NADP(+) site; that span reads GSGGS. Y230 contacts shikimate. Residue G251 coordinates NADP(+).

This sequence belongs to the shikimate dehydrogenase family. As to quaternary structure, homodimer.

The enzyme catalyses shikimate + NADP(+) = 3-dehydroshikimate + NADPH + H(+). It participates in metabolic intermediate biosynthesis; chorismate biosynthesis; chorismate from D-erythrose 4-phosphate and phosphoenolpyruvate: step 4/7. Its function is as follows. Involved in the biosynthesis of the chorismate, which leads to the biosynthesis of aromatic amino acids. Catalyzes the reversible NADPH linked reduction of 3-dehydroshikimate (DHSA) to yield shikimate (SA). This chain is Shikimate dehydrogenase (NADP(+)), found in Leptospira interrogans serogroup Icterohaemorrhagiae serovar Lai (strain 56601).